We begin with the raw amino-acid sequence, 313 residues long: Biotin synthase (313 aa).

The Radical SAM core domain occupies 28–258; sequence NFGNDIELCS…LFPQARLRLS (231 aa). 3 residues coordinate [4Fe-4S] cluster: Cys-46, Cys-50, and Cys-53. Cys-90, Cys-121, Cys-181, and Arg-256 together coordinate [2Fe-2S] cluster.

This sequence belongs to the radical SAM superfamily. Biotin synthase family. Homodimer. [4Fe-4S] cluster is required as a cofactor. Requires [2Fe-2S] cluster as cofactor.

The enzyme catalyses (4R,5S)-dethiobiotin + (sulfur carrier)-SH + 2 reduced [2Fe-2S]-[ferredoxin] + 2 S-adenosyl-L-methionine = (sulfur carrier)-H + biotin + 2 5'-deoxyadenosine + 2 L-methionine + 2 oxidized [2Fe-2S]-[ferredoxin]. Its pathway is cofactor biosynthesis; biotin biosynthesis; biotin from 7,8-diaminononanoate: step 2/2. Its function is as follows. Catalyzes the conversion of dethiobiotin (DTB) to biotin by the insertion of a sulfur atom into dethiobiotin via a radical-based mechanism. The protein is Biotin synthase of Francisella tularensis subsp. mediasiatica (strain FSC147).